Consider the following 105-residue polypeptide: Small ribosomal subunit protein uS10 (105 aa).

The protein belongs to the universal ribosomal protein uS10 family. In terms of assembly, part of the 30S ribosomal subunit.

In terms of biological role, involved in the binding of tRNA to the ribosomes. The sequence is that of Small ribosomal subunit protein uS10 from Acidobacterium capsulatum (strain ATCC 51196 / DSM 11244 / BCRC 80197 / JCM 7670 / NBRC 15755 / NCIMB 13165 / 161).